The following is a 384-amino-acid chain: Lipid-A-disaccharide synthase 1 (384 aa).

This sequence belongs to the LpxB family.

It catalyses the reaction a lipid X + a UDP-2-N,3-O-bis[(3R)-3-hydroxyacyl]-alpha-D-glucosamine = a lipid A disaccharide + UDP + H(+). The protein operates within bacterial outer membrane biogenesis; LPS lipid A biosynthesis. In terms of biological role, condensation of UDP-2,3-diacylglucosamine and 2,3-diacylglucosamine-1-phosphate to form lipid A disaccharide, a precursor of lipid A, a phosphorylated glycolipid that anchors the lipopolysaccharide to the outer membrane of the cell. This Legionella pneumophila (strain Lens) protein is Lipid-A-disaccharide synthase 1.